The sequence spans 227 residues: Cytochrome c oxidase subunit 2 (227 aa).

Residues Met-1–Ser-14 lie on the Mitochondrial intermembrane side of the membrane. The helical transmembrane segment at Pro-15–Met-45 threads the bilayer. At Leu-46–Gln-59 the chain is on the mitochondrial matrix side. A helical transmembrane segment spans residues Glu-60–Met-87. Over Asp-88–Ile-227 the chain is Mitochondrial intermembrane. Residues His-161, Cys-196, Glu-198, Cys-200, His-204, and Met-207 each contribute to the Cu cation site. Glu-198 serves as a coordination point for Mg(2+).

This sequence belongs to the cytochrome c oxidase subunit 2 family. In terms of assembly, component of the cytochrome c oxidase (complex IV, CIV), a multisubunit enzyme composed of 14 subunits. The complex is composed of a catalytic core of 3 subunits MT-CO1, MT-CO2 and MT-CO3, encoded in the mitochondrial DNA, and 11 supernumerary subunits COX4I, COX5A, COX5B, COX6A, COX6B, COX6C, COX7A, COX7B, COX7C, COX8 and NDUFA4, which are encoded in the nuclear genome. The complex exists as a monomer or a dimer and forms supercomplexes (SCs) in the inner mitochondrial membrane with NADH-ubiquinone oxidoreductase (complex I, CI) and ubiquinol-cytochrome c oxidoreductase (cytochrome b-c1 complex, complex III, CIII), resulting in different assemblies (supercomplex SCI(1)III(2)IV(1) and megacomplex MCI(2)III(2)IV(2)). Found in a complex with TMEM177, COA6, COX18, COX20, SCO1 and SCO2. Interacts with TMEM177 in a COX20-dependent manner. Interacts with COX20. Interacts with COX16. Requires Cu cation as cofactor.

It localises to the mitochondrion inner membrane. The enzyme catalyses 4 Fe(II)-[cytochrome c] + O2 + 8 H(+)(in) = 4 Fe(III)-[cytochrome c] + 2 H2O + 4 H(+)(out). Functionally, component of the cytochrome c oxidase, the last enzyme in the mitochondrial electron transport chain which drives oxidative phosphorylation. The respiratory chain contains 3 multisubunit complexes succinate dehydrogenase (complex II, CII), ubiquinol-cytochrome c oxidoreductase (cytochrome b-c1 complex, complex III, CIII) and cytochrome c oxidase (complex IV, CIV), that cooperate to transfer electrons derived from NADH and succinate to molecular oxygen, creating an electrochemical gradient over the inner membrane that drives transmembrane transport and the ATP synthase. Cytochrome c oxidase is the component of the respiratory chain that catalyzes the reduction of oxygen to water. Electrons originating from reduced cytochrome c in the intermembrane space (IMS) are transferred via the dinuclear copper A center (CU(A)) of subunit 2 and heme A of subunit 1 to the active site in subunit 1, a binuclear center (BNC) formed by heme A3 and copper B (CU(B)). The BNC reduces molecular oxygen to 2 water molecules using 4 electrons from cytochrome c in the IMS and 4 protons from the mitochondrial matrix. This chain is Cytochrome c oxidase subunit 2 (MT-CO2), found in Batomys granti (Luzon hairy-tailed rat).